The primary structure comprises 188 residues: Molybdopterin synthase catalytic subunit (188 aa).

Polar residues predominate over residues 1-10 (MSTSETSSYT). The disordered stretch occupies residues 1 to 21 (MSTSETSSYTPDIPSEPVTKT). Substrate-binding positions include 123–124 (HR), lysine 139, and 146–148 (KLE).

Belongs to the MoaE family. MOCS2B subfamily. As to quaternary structure, heterotetramer; composed of 2 small (MOCS2A) and 2 large (MOCS2B) subunits.

The protein localises to the cytoplasm. The catalysed reaction is 2 [molybdopterin-synthase sulfur-carrier protein]-C-terminal-Gly-aminoethanethioate + cyclic pyranopterin phosphate + H2O = molybdopterin + 2 [molybdopterin-synthase sulfur-carrier protein]-C-terminal Gly-Gly + 2 H(+). Its pathway is cofactor biosynthesis; molybdopterin biosynthesis. In terms of biological role, catalytic subunit of the molybdopterin synthase complex, a complex that catalyzes the conversion of precursor Z into molybdopterin. Acts by mediating the incorporation of 2 sulfur atoms from thiocarboxylated MOCS2A into precursor Z to generate a dithiolene group. The polypeptide is Molybdopterin synthase catalytic subunit (Phaeosphaeria nodorum (strain SN15 / ATCC MYA-4574 / FGSC 10173) (Glume blotch fungus)).